The primary structure comprises 97 residues: Aspartyl/glutamyl-tRNA(Asn/Gln) amidotransferase subunit C (97 aa).

The protein belongs to the GatC family. As to quaternary structure, heterotrimer of A, B and C subunits.

The catalysed reaction is L-glutamyl-tRNA(Gln) + L-glutamine + ATP + H2O = L-glutaminyl-tRNA(Gln) + L-glutamate + ADP + phosphate + H(+). The enzyme catalyses L-aspartyl-tRNA(Asn) + L-glutamine + ATP + H2O = L-asparaginyl-tRNA(Asn) + L-glutamate + ADP + phosphate + 2 H(+). Its function is as follows. Allows the formation of correctly charged Asn-tRNA(Asn) or Gln-tRNA(Gln) through the transamidation of misacylated Asp-tRNA(Asn) or Glu-tRNA(Gln) in organisms which lack either or both of asparaginyl-tRNA or glutaminyl-tRNA synthetases. The reaction takes place in the presence of glutamine and ATP through an activated phospho-Asp-tRNA(Asn) or phospho-Glu-tRNA(Gln). In Prochlorococcus marinus (strain MIT 9211), this protein is Aspartyl/glutamyl-tRNA(Asn/Gln) amidotransferase subunit C.